A 254-amino-acid chain; its full sequence is Pimeloyl-[acyl-carrier protein] methyl ester esterase (254 aa).

The 226-residue stretch at 16 to 241 folds into the AB hydrolase-1 domain; that stretch reads LVLLHGWGMN…QSSHAPFMTE (226 aa). Residues W22, 82–83, and 143–147 each bind substrate; these read SL and FMALQ. The Nucleophile role is filled by S82. Active-site residues include D207 and H235. Residue H235 participates in substrate binding.

It belongs to the AB hydrolase superfamily. Carboxylesterase BioH family. As to quaternary structure, monomer.

Its subcellular location is the cytoplasm. The enzyme catalyses 6-carboxyhexanoyl-[ACP] methyl ester + H2O = 6-carboxyhexanoyl-[ACP] + methanol + H(+). It participates in cofactor biosynthesis; biotin biosynthesis. Its function is as follows. The physiological role of BioH is to remove the methyl group introduced by BioC when the pimeloyl moiety is complete. It allows to synthesize pimeloyl-ACP via the fatty acid synthetic pathway through the hydrolysis of the ester bonds of pimeloyl-ACP esters. This Vibrio campbellii (strain ATCC BAA-1116) protein is Pimeloyl-[acyl-carrier protein] methyl ester esterase.